The sequence spans 126 residues: S-adenosylmethionine decarboxylase proenzyme (126 aa).

Catalysis depends on S63, which acts as the Schiff-base intermediate with substrate; via pyruvic acid. S63 carries the pyruvic acid (Ser); by autocatalysis modification. H68 (proton acceptor; for processing activity) is an active-site residue. Residue C83 is the Proton donor; for catalytic activity of the active site.

It belongs to the prokaryotic AdoMetDC family. Type 1 subfamily. Heterotetramer of two alpha and two beta chains arranged as a dimer of alpha/beta heterodimers. It depends on pyruvate as a cofactor. Post-translationally, is synthesized initially as an inactive proenzyme. Formation of the active enzyme involves a self-maturation process in which the active site pyruvoyl group is generated from an internal serine residue via an autocatalytic post-translational modification. Two non-identical subunits are generated from the proenzyme in this reaction, and the pyruvate is formed at the N-terminus of the alpha chain, which is derived from the carboxyl end of the proenzyme. The post-translation cleavage follows an unusual pathway, termed non-hydrolytic serinolysis, in which the side chain hydroxyl group of the serine supplies its oxygen atom to form the C-terminus of the beta chain, while the remainder of the serine residue undergoes an oxidative deamination to produce ammonia and the pyruvoyl group blocking the N-terminus of the alpha chain.

It carries out the reaction S-adenosyl-L-methionine + H(+) = S-adenosyl 3-(methylsulfanyl)propylamine + CO2. Its pathway is amine and polyamine biosynthesis; S-adenosylmethioninamine biosynthesis; S-adenosylmethioninamine from S-adenosyl-L-methionine: step 1/1. Catalyzes the decarboxylation of S-adenosylmethionine to S-adenosylmethioninamine (dcAdoMet), the propylamine donor required for the synthesis of the polyamines spermine and spermidine from the diamine putrescine. This is S-adenosylmethionine decarboxylase proenzyme from Pelotomaculum thermopropionicum (strain DSM 13744 / JCM 10971 / SI).